Reading from the N-terminus, the 92-residue chain is uncharacterized protein (92 aa).

Helical transmembrane passes span 1 to 21 (MEVL…GVIL), 29 to 49 (IIML…CYYL), and 51 to 71 (IAIV…LGYL).

The protein resides in the cell membrane. This is an uncharacterized protein from Methanocaldococcus jannaschii (strain ATCC 43067 / DSM 2661 / JAL-1 / JCM 10045 / NBRC 100440) (Methanococcus jannaschii).